The primary structure comprises 353 residues: MSSTALYTVPTAGPDDVAALKALDGHSASDILAVIGKTEGNGCVNDFSRTLSAAVWHPLLEDSAITVFSGGAEGVISPHVNIFVRDERQYSGHPRGLVTAVGRTRVIGPEEIGRPAQVDAVHETVVALLTELGVGPDDVHLVLIKCPLLSSDAIAGVHRRGLRPVTTDTYESMSRSRAASALGIAMALKECDRDRALLALEGRDDVWSARASASSGAELDDCHILVVAESDAAANPLRAAHTAMRDALDIQALTEVFDRIAAEGGTVRQIFAKAEADPSGAIRGYRHTMLTDSDVNATRHARAAVGGLIAALHGNGAVYVSGGAEHQGPSGGGSVTVIYDVPATANATGEASR.

The tract at residues 1 to 90 is RU A; that stretch reads MSSTALYTVP…NIFVRDERQY (90 aa). Residues R49 and 69–70 each bind substrate; that span reads SG. The interval 96-231 is RU B; the sequence is GLVTAVGRTR…CHILVVAESD (136 aa). Residue K145 is part of the active site. Substrate-binding positions include R177 and 214-215; that span reads SS. The active-site Nucleophile is S214. The segment at 237–353 is RU C; that stretch reads LRAAHTAMRD…TANATGEASR (117 aa). Residue E275 participates in Mg(2+) binding. Substrate is bound by residues R302 and 321-322; that span reads SG. Mg(2+) contacts are provided by A324, Q327, G328, P329, and G332.

The protein belongs to the cyclic amide hydrolase (CyAH) family. In terms of assembly, homotetramer.

The enzyme catalyses cyanurate + H2O = 1-carboxybiuret + H(+). The protein operates within xenobiotic degradation; atrazine degradation; biuret from cyanurate: step 1/1. Its activity is regulated as follows. Inhibited by barbituric acid. Responsible for the hydrolysis of cyanuric acid, an intermediate formed during catabolism of s-triazine based compounds in herbicides such as atrazine and polymers such as melamine. Catalyzes the hydrolytic opening of the s-triazine ring of cyanuric acid (2,4,6-trihydroxy-s-triazine) to yield carbon dioxide and carboxybiuret, which spontaneously decarboxylates to biuret. Required for growth on melamine or cyanuric acid as sole nitrogen source. In Rhodococcus sp, this protein is Cyanuric acid amidohydrolase.